Here is a 106-residue protein sequence, read N- to C-terminus: Phosphoribosyl-ATP pyrophosphatase (106 aa).

This sequence belongs to the PRA-PH family.

It localises to the cytoplasm. It catalyses the reaction 1-(5-phospho-beta-D-ribosyl)-ATP + H2O = 1-(5-phospho-beta-D-ribosyl)-5'-AMP + diphosphate + H(+). The protein operates within amino-acid biosynthesis; L-histidine biosynthesis; L-histidine from 5-phospho-alpha-D-ribose 1-diphosphate: step 2/9. This Geotalea daltonii (strain DSM 22248 / JCM 15807 / FRC-32) (Geobacter daltonii) protein is Phosphoribosyl-ATP pyrophosphatase.